The sequence spans 227 residues: Adenosylcobinamide-GDP ribazoletransferase (227 aa).

Transmembrane regions (helical) follow at residues 3–23 (CLKAVVAFFTALPVGGAELDF), 26–46 (IWATPYLAGLMVGGAGGAVYF), 95–115 (GVGGIFAVVALFVLAASARPE), 117–137 (WLDYIVTDLYSKALALVVAAY), and 165–185 (AVAAWLHPAAFLAATVLSLFF).

Belongs to the CobS family. Mg(2+) serves as cofactor.

It is found in the cell membrane. It catalyses the reaction alpha-ribazole + adenosylcob(III)inamide-GDP = adenosylcob(III)alamin + GMP + H(+). The enzyme catalyses alpha-ribazole 5'-phosphate + adenosylcob(III)inamide-GDP = adenosylcob(III)alamin 5'-phosphate + GMP + H(+). It functions in the pathway cofactor biosynthesis; adenosylcobalamin biosynthesis; adenosylcobalamin from cob(II)yrinate a,c-diamide: step 7/7. Its function is as follows. Joins adenosylcobinamide-GDP and alpha-ribazole to generate adenosylcobalamin (Ado-cobalamin). Also synthesizes adenosylcobalamin 5'-phosphate from adenosylcobinamide-GDP and alpha-ribazole 5'-phosphate. This chain is Adenosylcobinamide-GDP ribazoletransferase, found in Pyrobaculum islandicum (strain DSM 4184 / JCM 9189 / GEO3).